The primary structure comprises 529 residues: Lysine--tRNA ligase (529 aa).

Residues 29-37 (ISGSVHIGN) carry the 'HIGH' region motif. The 'KMSKS' region motif lies at 274–278 (AMSKS). Lysine 277 contacts ATP.

This sequence belongs to the class-I aminoacyl-tRNA synthetase family.

Its subcellular location is the cytoplasm. It catalyses the reaction tRNA(Lys) + L-lysine + ATP = L-lysyl-tRNA(Lys) + AMP + diphosphate. This chain is Lysine--tRNA ligase, found in Methanosphaera stadtmanae (strain ATCC 43021 / DSM 3091 / JCM 11832 / MCB-3).